We begin with the raw amino-acid sequence, 559 residues long: Formate--tetrahydrofolate ligase (559 aa).

68-75 is an ATP binding site; sequence TPAGEGKT.

Belongs to the formate--tetrahydrofolate ligase family.

The enzyme catalyses (6S)-5,6,7,8-tetrahydrofolate + formate + ATP = (6R)-10-formyltetrahydrofolate + ADP + phosphate. It functions in the pathway one-carbon metabolism; tetrahydrofolate interconversion. The sequence is that of Formate--tetrahydrofolate ligase from Rhizobium rhizogenes (strain K84 / ATCC BAA-868) (Agrobacterium radiobacter).